A 158-amino-acid chain; its full sequence is Phosphopantetheine adenylyltransferase (158 aa).

T9 provides a ligand contact to substrate. ATP is bound by residues 9-10 (TF) and H17. Substrate is bound by residues K41, L73, and R87. Residues 88–90 (GVR), E98, and 123–129 (WSYVSST) each bind ATP.

Belongs to the bacterial CoaD family. In terms of assembly, homohexamer. Requires Mg(2+) as cofactor.

It localises to the cytoplasm. The enzyme catalyses (R)-4'-phosphopantetheine + ATP + H(+) = 3'-dephospho-CoA + diphosphate. It participates in cofactor biosynthesis; coenzyme A biosynthesis; CoA from (R)-pantothenate: step 4/5. Its function is as follows. Reversibly transfers an adenylyl group from ATP to 4'-phosphopantetheine, yielding dephospho-CoA (dPCoA) and pyrophosphate. The polypeptide is Phosphopantetheine adenylyltransferase (Histophilus somni (strain 2336) (Haemophilus somnus)).